The sequence spans 1584 residues: Cilia- and flagella-associated protein 74 (1584 aa).

Residues 300-379 adopt a coiled-coil conformation; it reads RKFQAWDRAK…EAEEEKRKKQ (80 aa). The span at 692 to 706 shows a compositional bias: polar residues; that stretch reads SEQQLEGTESSQADM. Residues 692 to 739 are disordered; that stretch reads SEQQLEGTESSQADMQSRKELEKLDKEQEEEQPAEPERLTTVIPPSEE. A compositionally biased stretch (basic and acidic residues) spans 707 to 717; the sequence is QSRKELEKLDK.

It belongs to the CFAP74 family.

The protein localises to the cytoplasm. Its subcellular location is the cytoskeleton. It is found in the cilium axoneme. The protein resides in the flagellum axoneme. In terms of biological role, as part of the central apparatus of the cilium axoneme may play a role in cilium movement. May play an important role in sperm architecture and function. This Homo sapiens (Human) protein is Cilia- and flagella-associated protein 74.